A 107-amino-acid chain; its full sequence is uncharacterized protein (107 aa).

It localises to the mitochondrion. This is an uncharacterized protein from Arabidopsis thaliana (Mouse-ear cress).